The sequence spans 556 residues: MLSDIAIAQRARLEPITKVAEQIGLGPEDLELYGRYKAKVADHVWPRVRSNPDGKLILVTAISPTPAGEGKTTVTVGLGQAMSRIGKRAIIALREPSLGPAFGVKGGAAGGGYSQVVPMDEINLHFTGDFHAVTAANNLLAAMIDNHLHQGNKLGLDPRQITFKRVLDMNDRALRSVVIGLGGKNGGVPRQEEFMITPASEVMATLCLAEDLADLKRRCGEIIVGYTYDGAPVRARDLKAEGAMATLLKEAIKPNLVQTLENTPAFVHGGPFANIAHGCNTVVATRLALKLADYVITEAGFGADLGAEKFIDIKCRLSGLRPDAVVVVATIRSLKMHGGLKKDDLAREDLEALQRGSANLMRHLRNVTEVFGLPAVVAINRFAADTEAEIALLRALVEEAGATAVVADVHARGGDGGIELAQRVVELVEQPNRFRFAYDDEDSLKTKIEKVATRIYGADGVDFTREASRMLKKLESEGFGRAPVCIAKTQYSFSDDPKKLGAPTGWRLTVREVRPSAGAGFVVALTGEIMTMPGLPPVPAAESIDVSDDGEITGLF.

An ATP-binding site is contributed by 65–72; the sequence is TPAGEGKT.

This sequence belongs to the formate--tetrahydrofolate ligase family.

It catalyses the reaction (6S)-5,6,7,8-tetrahydrofolate + formate + ATP = (6R)-10-formyltetrahydrofolate + ADP + phosphate. It functions in the pathway one-carbon metabolism; tetrahydrofolate interconversion. In Symbiobacterium thermophilum (strain DSM 24528 / JCM 14929 / IAM 14863 / T), this protein is Formate--tetrahydrofolate ligase.